A 404-amino-acid chain; its full sequence is S-adenosylmethionine synthase (404 aa).

His18 provides a ligand contact to ATP. Asp20 provides a ligand contact to Mg(2+). K(+) is bound at residue Glu46. 2 residues coordinate L-methionine: Glu59 and Gln102. The flexible loop stretch occupies residues 102-112 (QSPEIAQGVDH). Residues 178-180 (DGK), 249-250 (KF), Asp258, 264-265 (RK), Ala281, and Lys285 contribute to the ATP site. Asp258 is a binding site for L-methionine. L-methionine is bound at residue Lys289.

The protein belongs to the AdoMet synthase family. Homotetramer; dimer of dimers. Mg(2+) serves as cofactor. It depends on K(+) as a cofactor.

Its subcellular location is the cytoplasm. It carries out the reaction L-methionine + ATP + H2O = S-adenosyl-L-methionine + phosphate + diphosphate. The protein operates within amino-acid biosynthesis; S-adenosyl-L-methionine biosynthesis; S-adenosyl-L-methionine from L-methionine: step 1/1. Its function is as follows. Catalyzes the formation of S-adenosylmethionine (AdoMet) from methionine and ATP. The overall synthetic reaction is composed of two sequential steps, AdoMet formation and the subsequent tripolyphosphate hydrolysis which occurs prior to release of AdoMet from the enzyme. This Rhodococcus opacus (strain B4) protein is S-adenosylmethionine synthase.